A 127-amino-acid chain; its full sequence is uncharacterized protein (127 aa).

A helical transmembrane segment spans residues 5–25 (ILGITIAFIILLLTTVAILFS).

The protein resides in the membrane. This is an uncharacterized protein from Mycoplasma genitalium (strain ATCC 33530 / DSM 19775 / NCTC 10195 / G37) (Mycoplasmoides genitalium).